We begin with the raw amino-acid sequence, 346 residues long: Holliday junction branch migration complex subunit RuvB (346 aa).

The span at 1-11 shows a compositional bias: polar residues; it reads MTEQRTIASSA. The disordered stretch occupies residues 1-20; sequence MTEQRTIASSATREDEAADA. The segment at 1-183 is large ATPase domain (RuvB-L); that stretch reads MTEQRTIASS…FGIVQRLEFY (183 aa). ATP is bound by residues Ile-22, Arg-23, Gly-64, Lys-67, Thr-68, Thr-69, 130–132, Arg-173, Tyr-183, and Arg-220; that span reads EDF. Thr-68 serves as a coordination point for Mg(2+). A small ATPAse domain (RuvB-S) region spans residues 184–254; that stretch reads SPQELTRIVI…VAQAAMQMLK (71 aa). The interval 257 to 346 is head domain (RuvB-H); it reads PEGFDELDRR…PAIGEPGDLF (90 aa). Positions 293, 312, and 317 each coordinate DNA.

The protein belongs to the RuvB family. In terms of assembly, homohexamer. Forms an RuvA(8)-RuvB(12)-Holliday junction (HJ) complex. HJ DNA is sandwiched between 2 RuvA tetramers; dsDNA enters through RuvA and exits via RuvB. An RuvB hexamer assembles on each DNA strand where it exits the tetramer. Each RuvB hexamer is contacted by two RuvA subunits (via domain III) on 2 adjacent RuvB subunits; this complex drives branch migration. In the full resolvosome a probable DNA-RuvA(4)-RuvB(12)-RuvC(2) complex forms which resolves the HJ.

It is found in the cytoplasm. The enzyme catalyses ATP + H2O = ADP + phosphate + H(+). The RuvA-RuvB-RuvC complex processes Holliday junction (HJ) DNA during genetic recombination and DNA repair, while the RuvA-RuvB complex plays an important role in the rescue of blocked DNA replication forks via replication fork reversal (RFR). RuvA specifically binds to HJ cruciform DNA, conferring on it an open structure. The RuvB hexamer acts as an ATP-dependent pump, pulling dsDNA into and through the RuvAB complex. RuvB forms 2 homohexamers on either side of HJ DNA bound by 1 or 2 RuvA tetramers; 4 subunits per hexamer contact DNA at a time. Coordinated motions by a converter formed by DNA-disengaged RuvB subunits stimulates ATP hydrolysis and nucleotide exchange. Immobilization of the converter enables RuvB to convert the ATP-contained energy into a lever motion, pulling 2 nucleotides of DNA out of the RuvA tetramer per ATP hydrolyzed, thus driving DNA branch migration. The RuvB motors rotate together with the DNA substrate, which together with the progressing nucleotide cycle form the mechanistic basis for DNA recombination by continuous HJ branch migration. Branch migration allows RuvC to scan DNA until it finds its consensus sequence, where it cleaves and resolves cruciform DNA. The sequence is that of Holliday junction branch migration complex subunit RuvB from Xanthomonas campestris pv. campestris (strain B100).